Consider the following 90-residue polypeptide: Small ribosomal subunit protein bS16 (90 aa).

It belongs to the bacterial ribosomal protein bS16 family.

This is Small ribosomal subunit protein bS16 from Heliobacterium modesticaldum (strain ATCC 51547 / Ice1).